The chain runs to 371 residues: Cytochrome b (371 aa).

4 consecutive transmembrane segments (helical) span residues Phe25–Val45, Trp69–Ile90, Trp105–Leu125, and Phe170–Met190. The heme b site is built by His75 and His89. Heme b contacts are provided by His174 and His188. His193 serves as a coordination point for a ubiquinone. The next 4 helical transmembrane spans lie at Tyr218–Phe238, Leu280–His300, Ile312–Thr332, and Phe339–Pro358.

It belongs to the cytochrome b family. The cytochrome bc1 complex contains 3 respiratory subunits (MT-CYB, CYC1 and UQCRFS1), 2 core proteins (UQCRC1 and UQCRC2) and probably 6 low-molecular weight proteins. It depends on heme b as a cofactor.

It is found in the mitochondrion inner membrane. Its function is as follows. Component of the ubiquinol-cytochrome c reductase complex (complex III or cytochrome b-c1 complex) that is part of the mitochondrial respiratory chain. The b-c1 complex mediates electron transfer from ubiquinol to cytochrome c. Contributes to the generation of a proton gradient across the mitochondrial membrane that is then used for ATP synthesis. The polypeptide is Cytochrome b (MT-CYB) (Eryx colubrinus colubrinus).